We begin with the raw amino-acid sequence, 169 residues long: Probable chorismate pyruvate-lyase (169 aa).

3 residues coordinate substrate: Arg71, Ile110, and Glu150.

This sequence belongs to the UbiC family.

Its subcellular location is the cytoplasm. It carries out the reaction chorismate = 4-hydroxybenzoate + pyruvate. The protein operates within cofactor biosynthesis; ubiquinone biosynthesis. Removes the pyruvyl group from chorismate, with concomitant aromatization of the ring, to provide 4-hydroxybenzoate (4HB) for the ubiquinone pathway. This chain is Probable chorismate pyruvate-lyase, found in Acinetobacter baumannii (strain ATCC 17978 / DSM 105126 / CIP 53.77 / LMG 1025 / NCDC KC755 / 5377).